The primary structure comprises 301 residues: NADH-cytochrome b5 reductase 3 (301 aa).

G2 is lipidated: N-myristoyl glycine. An FAD-binding FR-type domain is found at 40-152 (DIKYPLRLID…RGPNGLLVYQ (113 aa)). Residue K42 is modified to N6-acetyllysine. At Y43 the chain carries Phosphotyrosine. K50 is subject to N6-acetyllysine. FAD contacts are provided by R92, P93, Y94, V109, K111, and F114. K120 is subject to N6-acetyllysine. The FAD site is built by K126, M127, S128, and T185.

This sequence belongs to the flavoprotein pyridine nucleotide cytochrome reductase family. As to quaternary structure, component of a complex composed of cytochrome b5, NADH-cytochrome b5 reductase (CYB5R3) and MTARC2. Interacts with MTLN; the interaction is required to maintain cellular lipid composition and leads to stimulation of mitochondrial respiratory complex I activity. Requires FAD as cofactor. Myristoylated. Ubiquitously expressed. In terms of tissue distribution, expressed only in erythroid tissues, reticulocytes and liver.

It is found in the endoplasmic reticulum membrane. Its subcellular location is the mitochondrion outer membrane. The protein resides in the cytoplasm. It catalyses the reaction 2 Fe(III)-[cytochrome b5] + NADH = 2 Fe(II)-[cytochrome b5] + NAD(+) + H(+). In terms of biological role, catalyzes the reduction of two molecules of cytochrome b5 using NADH as the electron donor. This chain is NADH-cytochrome b5 reductase 3, found in Rattus norvegicus (Rat).